Reading from the N-terminus, the 620-residue chain is Glutathione-regulated potassium-efflux system protein KefC (620 aa).

At 1–3 the chain is on the periplasmic side; that stretch reads MDS. Residues 4–24 traverse the membrane as a helical segment; that stretch reads HTLLQALIYLGSAALIVPIAV. Residue Arg25 is a topological domain, cytoplasmic. Residues 26 to 46 traverse the membrane as a helical segment; that stretch reads LGLGSVLGYLIAGCIIGPWGL. Residues 47–53 are Periplasmic-facing; sequence RLVTDAE. A helical membrane pass occupies residues 54-74; that stretch reads SILHFAEIGVVLMLFVIGLEL. Topologically, residues 75–89 are cytoplasmic; sequence DPQRLWKLRASVFGG. The chain crosses the membrane as a helical span at residues 90 to 110; the sequence is GALQMVVCGGLIGLFCMFLGL. At 111-113 the chain is on the periplasmic side; sequence RWQ. The helical transmembrane segment at 114–134 threads the bilayer; sequence VAELIGMTLALSSTAIAMQAM. Topologically, residues 135-148 are cytoplasmic; the sequence is NERNLTVSQVGRSA. The chain crosses the membrane as a helical span at residues 149–169; the sequence is FAVLLFQDIAAIPLVAMIPLL. Over 170–177 the chain is Periplasmic; sequence AASGASTT. The chain crosses the membrane as a helical span at residues 178–198; the sequence is LGAFALSALKVAGALALVVLL. Over 199-213 the chain is Cytoplasmic; it reads GRYVTRPALRFVARS. Residues 214-233 form a helical membrane-spanning segment; that stretch reads GLREVFSAVALFLVFGFGLL. Residues 234–236 are Periplasmic-facing; that stretch reads LEE. The chain crosses the membrane as a helical span at residues 237 to 254; it reads VGLSMAMGAFLAGVLLAS. Residues 255–269 lie on the Cytoplasmic side of the membrane; that stretch reads SEYRHALESDIEPFK. Residues 270–290 form a helical membrane-spanning segment; that stretch reads GLLLGLFFIGVGMSIDFGTLV. The Periplasmic portion of the chain corresponds to 291–293; sequence ENP. The helical transmembrane segment at 294–314 threads the bilayer; that stretch reads LRILLLLAGFLAIKIVMLWLV. Residues 315–326 lie on the Cytoplasmic side of the membrane; that stretch reads ARTLGVPAKQRR. The helical transmembrane segment at 327–347 threads the bilayer; that stretch reads WFAVLLGQGSEFAFVVFGAAQ. The Periplasmic portion of the chain corresponds to 348–358; the sequence is MADVLEPEWAK. A helical membrane pass occupies residues 359-379; that stretch reads ALTLAVALSMAATPIFLVLLT. Residues 380 to 620 lie on the Cytoplasmic side of the membrane; the sequence is RMEKTATGEA…ADEPEVKPSI (241 aa). Residues 399–518 enclose the RCK N-terminal domain; that stretch reads QPRVIVAGFG…AGVAMPERET (120 aa). The interval 599-620 is disordered; it reads QGTAEGKHSGKAADEPEVKPSI. Residues 603–620 are compositionally biased toward basic and acidic residues; sequence EGKHSGKAADEPEVKPSI.

Belongs to the monovalent cation:proton antiporter 2 (CPA2) transporter (TC 2.A.37) family. KefC subfamily. Homodimer. Interacts with the regulatory subunit KefF.

The protein resides in the cell inner membrane. In terms of biological role, pore-forming subunit of a potassium efflux system that confers protection against electrophiles. Catalyzes K(+)/H(+) antiport. In Salmonella typhi, this protein is Glutathione-regulated potassium-efflux system protein KefC.